The chain runs to 118 residues: Cytochrome b-c1 complex subunit 7 (118 aa).

Residues 1 to 32 are igE-binding. Immunodominant epitope; induces specific IgE antibody production in mice. Causes degranulation of rat basophilic leukemia (RBL) cells and the release of beta-hexosaminidase from them; the sequence is MVHLTKTLRFINNPGFRKFYYGLQGYNKYGLY.

This sequence belongs to the UQCRB/QCR7 family. Component of the ubiquinol-cytochrome c oxidoreductase (cytochrome b-c1 complex, complex III, CIII), a multisubunit enzyme composed of 3 respiratory subunits cytochrome b, cytochrome c1 and Rieske protein, 2 core protein subunits, and additional low-molecular weight protein subunits. The complex exists as an obligatory dimer and forms supercomplexes (SCs) in the inner mitochondrial membrane with cytochrome c oxidase (complex IV, CIV).

The protein resides in the mitochondrion inner membrane. Its function is as follows. Component of the ubiquinol-cytochrome c oxidoreductase, a multisubunit transmembrane complex that is part of the mitochondrial electron transport chain which drives oxidative phosphorylation. The respiratory chain contains 3 multisubunit complexes succinate dehydrogenase (complex II, CII), ubiquinol-cytochrome c oxidoreductase (cytochrome b-c1 complex, complex III, CIII) and cytochrome c oxidase (complex IV, CIV), that cooperate to transfer electrons derived from NADH and succinate to molecular oxygen, creating an electrochemical gradient over the inner membrane that drives transmembrane transport and the ATP synthase. The cytochrome b-c1 complex catalyzes electron transfer from ubiquinol to cytochrome c, linking this redox reaction to translocation of protons across the mitochondrial inner membrane, with protons being carried across the membrane as hydrogens on the quinol. In the process called Q cycle, 2 protons are consumed from the matrix, 4 protons are released into the intermembrane space and 2 electrons are passed to cytochrome c. This Dermatophagoides farinae (American house dust mite) protein is Cytochrome b-c1 complex subunit 7.